Reading from the N-terminus, the 550-residue chain is Leucine-rich repeat, immunoglobulin-like domain and transmembrane domain-containing protein 2 (550 aa).

The N-terminal stretch at 1–19 (MASVFHYFLLVLVFLDTHA) is a signal peptide. The region spanning 23-54 (FCLPGCTCSEESFGRTLQCTSVSLGKIPGNLS) is the LRRNT domain. Asparagine 52 is a glycosylation site (N-linked (GlcNAc...) asparagine). LRR repeat units follow at residues 80 to 103 (TLEY…EHLP), 104 to 125 (ELRE…AFRA), 128 to 149 (LLRV…ALQF), and 152 to 173 (SLTY…VFLN). An LRRCT domain is found at 200–252 (NPWVCDCRLRGLVQFVKSITLPVILVNSYLICQGPLSKAGQLFHETELSACMK). An Ig-like domain is found at 253-341 (PQISTPSANI…SIGKSNLVIS (89 aa)). Cysteines 274 and 327 form a disulfide. Positions 361-451 (EGNAYIDLRV…QGQCVAFVTG (91 aa)) constitute a Fibronectin type-III domain. A helical transmembrane segment spans residues 466–486 (VTVVLCVVLLAVPVGAYAWAA). The segment at 508 to 550 (SCTPAAPQSKDGSFREHPAVCDDGEGHIDTEGDKEKGGTEDNS) is disordered. Positions 519 to 550 (GSFREHPAVCDDGEGHIDTEGDKEKGGTEDNS) are enriched in basic and acidic residues.

In terms of assembly, interacts with LRIT1; may form a heterodimer with LRIT1.

The protein localises to the membrane. The chain is Leucine-rich repeat, immunoglobulin-like domain and transmembrane domain-containing protein 2 (LRIT2) from Homo sapiens (Human).